Reading from the N-terminus, the 593-residue chain is Genetic interactor of prohibitins 3, mitochondrial (593 aa).

The transit peptide at 1-61 directs the protein to the mitochondrion; it reads MLGRIRPFVR…NPSKPGFYRP (61 aa). The CP-type G domain maps to 142-349; it reads VESIDKIMST…IVDVPGFSAN (208 aa).

It belongs to the TRAFAC class YlqF/YawG GTPase family. GEP3 subfamily.

It is found in the mitochondrion. Functionally, may be involved in the mitochondrial lipid metabolism. This is Genetic interactor of prohibitins 3, mitochondrial (GEP3) from Debaryomyces hansenii (strain ATCC 36239 / CBS 767 / BCRC 21394 / JCM 1990 / NBRC 0083 / IGC 2968) (Yeast).